Consider the following 723-residue polypeptide: Transient receptor potential cation channel subfamily V member 5 (723 aa).

At 1–320 (MGAKTPWIQL…SLKWKKYGQP (320 aa)) the chain is on the cytoplasmic side. ANK repeat units lie at residues 38 to 68 (IWESPLLRAAKENDMCTLKKLQHDQNCDFRQ), 72 to 101 (LGETALHVAALYDNLDAAIMLMEAAPYLVT), 110 to 139 (VGQTALHIAVMNQNVNLVRALLARGASASA), 156 to 185 (YGEHPLSFAACVGSEEIVRLLIEHGADIRA), 189 to 222 (LGNTVLHILVLQPNKTFACQMYNLLLSYDGGDHL), and 232 to 261 (QGLTPFKLAGVEGNTVMFQHLMQKRKRIQW). The helical transmembrane segment at 321-341 (YFCLLGALYIFYMVCFTTCCV) threads the bilayer. The Extracellular portion of the chain corresponds to 342–378 (YRPLKFRDANRTHVRDNTIMEQKSLQEAYVTYQDKIR). A helical transmembrane segment spans residues 379–401 (LVGELVTVIGAVIILLLEIPDIF). Topologically, residues 402–412 (RVGASRYFGQT) are extracellular. Residues 413–435 (VLGGPFHVIIITYASLVLLTMAM) traverse the membrane as a helical segment. Topologically, residues 436–441 (RLTNVN) are cytoplasmic. The chain crosses the membrane as a helical span at residues 442–462 (GEVVPMSMALVLGWCSVMYFA). The Extracellular portion of the chain corresponds to 463–485 (RGFQMLGPFTIMIQKMIFGDLLR). A helical membrane pass occupies residues 486–506 (FCWLMAMVILGFASAFYIIFQ). Positions 517-537 (SDYPTAMFSTFELFLTIIDGP) form an intramembrane region, pore-forming. D535 lines the Ca(2+) pocket. A helical transmembrane segment spans residues 550 to 570 (VTYATFAIIATLLMLNLFIAM). Over 571-723 (MGDTHWRVAQ…EGDGEEIYQF (153 aa)) the chain is Cytoplasmic. Residues 591–595 (VATTV) are interaction with S100A10. An involved in Ca(2+)-dependent inactivation region spans residues 643-646 (AFKS). Positions 651 to 673 (EVQEQLSEKQPSGTETGTLARGS) are disordered. Positions 654 to 667 (EQLSEKQPSGTETG) are enriched in polar residues. A Phosphothreonine modification is found at T678. Phosphoserine is present on S682. The tract at residues 693-723 (RGWEILRRNTLGHLNLGLDPGEGDGEEIYQF) is involved in Ca(2+)-dependent inactivation.

The protein belongs to the transient receptor (TC 1.A.4) family. TrpV subfamily. TRPV5 sub-subfamily. As to quaternary structure, homotetramer and probably heterotetramer with TRPV6. Interacts with TRPV6. Interacts with S100A10 and probably with the ANAX2-S100A10 heterotetramer. The interaction with S100A10 is required for the trafficking to the plasma membrane. Interacts with calmodulin. Interacts with BSPRY, which results in its inactivation. In terms of processing, glycosylated. As to expression, detected in kidney cortex (at protein level).

It localises to the apical cell membrane. It carries out the reaction Ca(2+)(in) = Ca(2+)(out). Its activity is regulated as follows. Activated by WNK3. Its function is as follows. Constitutively active calcium selective cation channel thought to be involved in Ca(2+) reabsorption in kidney and intestine. Required for normal Ca(2+) reabsorption in the kidney distal convoluted tubules. The channel is activated by low internal calcium level and the current exhibits an inward rectification. A Ca(2+)-dependent feedback regulation includes fast channel inactivation and slow current decay. Heteromeric assembly with TRPV6 seems to modify channel properties. TRPV5-TRPV6 heteromultimeric concatemers exhibit voltage-dependent gating. This Mus musculus (Mouse) protein is Transient receptor potential cation channel subfamily V member 5 (Trpv5).